The chain runs to 181 residues: Cytochrome b6-f complex iron-sulfur subunit (181 aa).

Residues 1–35 (MAQTGNFKSPARMSSLGQGAAPASSGAVTGGKPRE) are disordered. Transmembrane regions (helical) follow at residues 53–73 (VGGV…KYII) and 114–134 (GGAL…VNWV). Positions 85–178 (LTVGKASEVP…ARIEGDSIII (94 aa)) constitute a Rieske domain. 4 residues coordinate [2Fe-2S] cluster: cysteine 124, histidine 126, cysteine 142, and histidine 145. Cysteine 129 and cysteine 144 are joined by a disulfide.

This sequence belongs to the Rieske iron-sulfur protein family. It depends on [2Fe-2S] cluster as a cofactor.

The protein resides in the cell inner membrane. It catalyses the reaction 2 oxidized [plastocyanin] + a plastoquinol + 2 H(+)(in) = 2 reduced [plastocyanin] + a plastoquinone + 4 H(+)(out). In terms of biological role, component of the green S-bacteria bc-complex which consists of the Rieske protein and cytochrome b subunit and which appears to lack a cytochrome c1-equivalent. This complex has a comparatively low redox potential. In Chlorobaculum thiosulfatiphilum (Chlorobium limicola f.sp. thiosulfatophilum), this protein is Cytochrome b6-f complex iron-sulfur subunit (petC).